The sequence spans 62 residues: Conotoxin Qc5.2 (62 aa).

Positions methionine 1–alanine 22 are cleaved as a signal peptide. The propeptide occupies histidine 23–methionine 48. Residue valine 60 is modified to Valine amide.

This sequence belongs to the conotoxin T superfamily. Post-translationally, contains 2 disulfide bonds that can be either 'C1-C3, C2-C4' or 'C1-C4, C2-C3', since these disulfide connectivities have been observed for conotoxins with cysteine framework V (for examples, see AC P0DQQ7 and AC P81755). As to expression, expressed by the venom duct.

Its subcellular location is the secreted. In Conus quercinus (Oak cone), this protein is Conotoxin Qc5.2.